Here is a 362-residue protein sequence, read N- to C-terminus: Isopentenyl-diphosphate delta-isomerase (362 aa).

Residue 5 to 6 (RK) participates in substrate binding. FMN-binding positions include 63 to 65 (AMT), Ser93, and Asn122. Gln152 provides a ligand contact to substrate. Position 153 (Glu153) interacts with Mg(2+). FMN contacts are provided by residues Lys184, Thr214, 259-261 (GIR), and 280-281 (AG).

This sequence belongs to the IPP isomerase type 2 family. As to quaternary structure, homooctamer. Dimer of tetramers. The cofactor is FMN. Requires NADPH as cofactor. Mg(2+) is required as a cofactor.

Its subcellular location is the cytoplasm. The enzyme catalyses isopentenyl diphosphate = dimethylallyl diphosphate. Involved in the biosynthesis of isoprenoids. Catalyzes the 1,3-allylic rearrangement of the homoallylic substrate isopentenyl (IPP) to its allylic isomer, dimethylallyl diphosphate (DMAPP). The polypeptide is Isopentenyl-diphosphate delta-isomerase (Nocardia farcinica (strain IFM 10152)).